Reading from the N-terminus, the 154-residue chain is Golgi-associated plant pathogenesis-related protein 1 (154 aa).

Positions Met1–Arg21 are disordered. The N-myristoyl glycine moiety is linked to residue Gly2. Basic and acidic residues predominate over residues Phe9–Arg21. Residues Leu14–Arg132 form the SCP domain. Residues Lys30–Lys53 are a coiled coil. Positions Asn91 to Thr98 are interaction with CAV1.

It belongs to the CRISP family. Homodimer. Interacts with CAV1. Highest expression in lung and peripheral leukocytes, and minor expression in liver and kidney.

It localises to the golgi apparatus membrane. This Homo sapiens (Human) protein is Golgi-associated plant pathogenesis-related protein 1 (GLIPR2).